The primary structure comprises 348 residues: Dihydroorotase (348 aa).

Zn(2+) contacts are provided by histidine 17 and histidine 19. Substrate is bound by residues 19–21 (HLR) and asparagine 45. Zn(2+) is bound by residues lysine 103, histidine 140, and histidine 178. Lysine 103 carries the N6-carboxylysine modification. Residue histidine 140 participates in substrate binding. Substrate is bound at residue leucine 223. Aspartate 251 is a binding site for Zn(2+). Aspartate 251 is an active-site residue. Histidine 255 and alanine 267 together coordinate substrate.

This sequence belongs to the metallo-dependent hydrolases superfamily. DHOase family. Class II DHOase subfamily. As to quaternary structure, homodimer. Requires Zn(2+) as cofactor.

The enzyme catalyses (S)-dihydroorotate + H2O = N-carbamoyl-L-aspartate + H(+). The protein operates within pyrimidine metabolism; UMP biosynthesis via de novo pathway; (S)-dihydroorotate from bicarbonate: step 3/3. Catalyzes the reversible cyclization of carbamoyl aspartate to dihydroorotate. This chain is Dihydroorotase, found in Escherichia coli O157:H7.